The following is a 260-amino-acid chain: Phosphoribosylaminoimidazole-succinocarboxamide synthase (260 aa).

It belongs to the SAICAR synthetase family.

It carries out the reaction 5-amino-1-(5-phospho-D-ribosyl)imidazole-4-carboxylate + L-aspartate + ATP = (2S)-2-[5-amino-1-(5-phospho-beta-D-ribosyl)imidazole-4-carboxamido]succinate + ADP + phosphate + 2 H(+). Its pathway is purine metabolism; IMP biosynthesis via de novo pathway; 5-amino-1-(5-phospho-D-ribosyl)imidazole-4-carboxamide from 5-amino-1-(5-phospho-D-ribosyl)imidazole-4-carboxylate: step 1/2. This Pelagibacter ubique (strain HTCC1062) protein is Phosphoribosylaminoimidazole-succinocarboxamide synthase.